Reading from the N-terminus, the 296-residue chain is Sulfotransferase 1B1 (296 aa).

48-53 (KSGTTW) is a 3'-phosphoadenylyl sulfate binding site. 107-109 (KTH) lines the substrate pocket. The Proton acceptor role is filled by His109. 3'-phosphoadenylyl sulfate is bound by residues Arg131, Ser139, Tyr194, 228–233 (TSFEMM), and 258–260 (RKG).

The protein belongs to the sulfotransferase 1 family. As to expression, expressed highly in the colon, kidney and small intestine of male and female dogs. Highly expressed in the jejunum and ileum of the male dog than the female dog, which displayed more expression in duodenum (at protein level).

Its subcellular location is the cytoplasm. It catalyses the reaction a phenol + 3'-phosphoadenylyl sulfate = an aryl sulfate + adenosine 3',5'-bisphosphate + H(+). The enzyme catalyses 3,3',5-triiodo-L-thyronine + 3'-phosphoadenylyl sulfate = 3,3',5-triiodo-L-thyronine sulfate + adenosine 3',5'-bisphosphate + H(+). It carries out the reaction 3,3',5'-triiodo-L-thyronine + 3'-phosphoadenylyl sulfate = 3,3',5'-triiodo-L-thyronine sulfate + adenosine 3',5'-bisphosphate + H(+). The catalysed reaction is 3,3'-diiodo-L-thyronine + 3'-phosphoadenylyl sulfate = 3,3'-diiodo-L-thyronine sulfate + adenosine 3',5'-bisphosphate + H(+). It catalyses the reaction 4-ethylphenol + 3'-phosphoadenylyl sulfate = 4-ethylphenyl sulfate + adenosine 3',5'-bisphosphate + H(+). Its function is as follows. Sulfotransferase that utilizes 3'-phospho-5'-adenylyl sulfate (PAPS) as sulfonate donor to catalyze the sulfate conjugation of dopamine, small phenols such as 1-naphthol and p-nitrophenol and thyroid hormones, including 3,3'-diiodothyronine, triidothyronine (T3) and reverse triiodothyronine (rT3). May play a role in gut microbiota-host metabolic interaction. O-sulfonates 4-ethylphenol (4-EP), a dietary tyrosine-derived metabolite produced by gut bacteria. The product 4-EPS crosses the blood-brain barrier and may negatively regulate oligodendrocyte maturation and myelination, affecting the functional connectivity of different brain regions associated with the limbic system. This is Sulfotransferase 1B1 (SULT1B1) from Canis lupus familiaris (Dog).